A 110-amino-acid chain; its full sequence is MEAIAKHNFARISPQKARLVADLIRGKSVDQALEILTFSNKKAAVLVKKVLESAIANAEHNEGADIDDLNVAKIFVDEGPTMKRIMPRAKGRADRILKRSSHITVVVADR.

This sequence belongs to the universal ribosomal protein uL22 family. Part of the 50S ribosomal subunit.

In terms of biological role, this protein binds specifically to 23S rRNA; its binding is stimulated by other ribosomal proteins, e.g. L4, L17, and L20. It is important during the early stages of 50S assembly. It makes multiple contacts with different domains of the 23S rRNA in the assembled 50S subunit and ribosome. The globular domain of the protein is located near the polypeptide exit tunnel on the outside of the subunit, while an extended beta-hairpin is found that lines the wall of the exit tunnel in the center of the 70S ribosome. This Vibrio campbellii (strain ATCC BAA-1116) protein is Large ribosomal subunit protein uL22.